Reading from the N-terminus, the 268-residue chain is Resolvase (268 aa).

The Tyr recombinase domain maps to 47–250 (ELPKYLLAPE…FALDVAARHR (204 aa)). Residues arginine 82, lysine 114, histidine 202, arginine 205, and histidine 228 contribute to the active site. Tyrosine 237 acts as the O-(3'-phospho-DNA)-tyrosine intermediate in catalysis.

This sequence belongs to the 'phage' integrase family.

In terms of biological role, acts as a repressor of transcription and as a site-specific resolvase that cleaves at the RfsF site. This is Resolvase (resD) from Escherichia coli (strain K12).